Here is a 164-residue protein sequence, read N- to C-terminus: UPF0303 protein R02983 (164 aa).

It belongs to the UPF0303 family.

The polypeptide is UPF0303 protein R02983 (Rhizobium meliloti (strain 1021) (Ensifer meliloti)).